The primary structure comprises 1416 residues: K homology domain-containing protein 4 (1416 aa).

5 disordered regions span residues 25-76 (NPNG…TSMR), 108-174 (KAEA…TRSS), 196-225 (VNSS…LSQS), 255-320 (QNDE…FPGR), and 341-385 (SSLN…MPKP). Low complexity-rich tracts occupy residues 196-213 (VNSS…SANH), 273-285 (QSSF…LDQL), and 341-350 (SSLNPPASGS). Over residues 357–369 (GLSSAQPLRSPQP) the composition is skewed to polar residues. 5 KH domains span residues 412 to 504 (FKST…VILD), 508 to 594 (GLRS…QVSM), 747 to 816 (FEVR…EELP), 817 to 892 (AEMS…SVME), and 900 to 968 (DYIS…DHVP). 2 disordered regions span residues 1215 to 1240 (AGVS…SGHR) and 1289 to 1416 (HASG…FDRA). The segment covering 1219–1239 (VPTSGGIQFPSQPSLHQQSGH) has biased composition (polar residues). The span at 1343 to 1374 (QQQAQQQLQYQQQQQQQQQQQQQPGYGMPHQP) shows a compositional bias: low complexity. The segment covering 1391 to 1402 (RNTQNPDSTTMD) has biased composition (polar residues).

Functionally, RNA-binding protein that recognizes the sequence AUACCC via its tandem KH domains 3 and 4, probably in order to promote mRNA instability. Plays an essential role in filamentous growth and virulence. This chain is K homology domain-containing protein 4, found in Mycosarcoma maydis (Corn smut fungus).